The sequence spans 214 residues: Probable GTP-binding protein EngB (214 aa).

One can recognise an EngB-type G domain in the interval 22-194; it reads HLPEIAFAGR…WARIDALLEP (173 aa). Residues 30–37, 57–61, 75–78, 142–145, and 173–175 each bind GTP; these read GRSNVGKS, GRTQL, DLPG, TKCD, and FSA. Mg(2+) is bound by residues S37 and T59. Positions 195 to 214 are disordered; the sequence is TAAETPGIPEEPAPPGPVND. The span at 203–214 shows a compositional bias: pro residues; sequence PEEPAPPGPVND.

Belongs to the TRAFAC class TrmE-Era-EngA-EngB-Septin-like GTPase superfamily. EngB GTPase family. It depends on Mg(2+) as a cofactor.

Its function is as follows. Necessary for normal cell division and for the maintenance of normal septation. The polypeptide is Probable GTP-binding protein EngB (Geobacter sp. (strain M21)).